A 148-amino-acid polypeptide reads, in one-letter code: Protein-export protein SecB (148 aa).

The protein belongs to the SecB family. In terms of assembly, homotetramer, a dimer of dimers. One homotetramer interacts with 1 SecA dimer.

It is found in the cytoplasm. One of the proteins required for the normal export of preproteins out of the cell cytoplasm. It is a molecular chaperone that binds to a subset of precursor proteins, maintaining them in a translocation-competent state. It also specifically binds to its receptor SecA. The sequence is that of Protein-export protein SecB from Psychrobacter arcticus (strain DSM 17307 / VKM B-2377 / 273-4).